A 297-amino-acid chain; its full sequence is Large ribosomal subunit protein uL18 (297 aa).

Belongs to the universal ribosomal protein uL18 family. Component of the large ribosomal subunit (LSU).

It localises to the cytoplasm. The protein localises to the nucleus. Component of the ribosome, a large ribonucleoprotein complex responsible for the synthesis of proteins in the cell. The small ribosomal subunit (SSU) binds messenger RNAs (mRNAs) and translates the encoded message by selecting cognate aminoacyl-transfer RNA (tRNA) molecules. The large subunit (LSU) contains the ribosomal catalytic site termed the peptidyl transferase center (PTC), which catalyzes the formation of peptide bonds, thereby polymerizing the amino acids delivered by tRNAs into a polypeptide chain. The nascent polypeptides leave the ribosome through a tunnel in the LSU and interact with protein factors that function in enzymatic processing, targeting, and the membrane insertion of nascent chains at the exit of the ribosomal tunnel. In Aedes aegypti (Yellowfever mosquito), this protein is Large ribosomal subunit protein uL18 (RpL5).